Consider the following 329-residue polypeptide: Diaminopimelate epimerase (329 aa).

Residues asparagine 14 and asparagine 73 each contribute to the substrate site. Catalysis depends on cysteine 82, which acts as the Proton donor. Residues 83–84 (GN), asparagine 170, asparagine 206, and 224–225 (ER) contribute to the substrate site. Cysteine 233 acts as the Proton acceptor in catalysis. 234–235 (GT) serves as a coordination point for substrate.

It belongs to the diaminopimelate epimerase family. Homodimer.

The protein localises to the cytoplasm. The enzyme catalyses (2S,6S)-2,6-diaminopimelate = meso-2,6-diaminopimelate. The protein operates within amino-acid biosynthesis; L-lysine biosynthesis via DAP pathway; DL-2,6-diaminopimelate from LL-2,6-diaminopimelate: step 1/1. Its function is as follows. Catalyzes the stereoinversion of LL-2,6-diaminopimelate (L,L-DAP) to meso-diaminopimelate (meso-DAP), a precursor of L-lysine and an essential component of the bacterial peptidoglycan. This chain is Diaminopimelate epimerase, found in Listeria monocytogenes serotype 4a (strain HCC23).